The following is a 482-amino-acid chain: Vanillin dehydrogenase (482 aa).

Residue 228–233 (GSTHVG) coordinates NAD(+). Catalysis depends on residues E250 and C284.

Belongs to the aldehyde dehydrogenase family.

The enzyme catalyses vanillin + NAD(+) + H2O = vanillate + NADH + 2 H(+). Catalyzes the NAD-dependent oxidation of vanillin to vanillic acid. This chain is Vanillin dehydrogenase (vdh), found in Pseudomonas fluorescens.